The primary structure comprises 117 residues: Modulator protein MzrA (117 aa).

Over 1–9 (MNSPGLRKP) the chain is Cytoplasmic. The helical transmembrane segment at 10 to 29 (TIWRPLLLLFPLLALLLSMS) threads the bilayer. Residues 30-117 (SPRLPDEVML…THGTIRVARS (88 aa)) lie on the Periplasmic side of the membrane.

It belongs to the MzrA family. Interacts with EnvZ.

The protein localises to the cell inner membrane. Modulates the activity of the EnvZ/OmpR two-component regulatory system, probably by directly modulating EnvZ enzymatic activity and increasing stability of phosphorylated OmpR. This chain is Modulator protein MzrA, found in Dickeya zeae (strain Ech586) (Dickeya dadantii (strain Ech586)).